We begin with the raw amino-acid sequence, 1132 residues long: Protein sel-1 homolog 3 (1132 aa).

The disordered stretch occupies residues 1 to 24 (MQRRGAGLGWPRQQQQQPPPLAVG). N-linked (GlcNAc...) asparagine glycosylation is found at asparagine 201, asparagine 382, and asparagine 527. Sel1-like repeat units follow at residues 575–609 (YLAV…RLSS), 611–647 (NLGY…DQHT), 694–730 (RLAQ…PALI), 732–767 (DYAI…QAVN), 768–800 (GLGW…DASY), 801–839 (NLGV…EGTL), and 840–877 (WCSL…LGHV). Position 608 is a phosphoserine (serine 608). Asparagine 937 is a glycosylation site (N-linked (GlcNAc...) asparagine). The Sel1-like 8 repeat unit spans residues 952 to 988 (KMGDLYYYGHQNQSQDLELSVQMYAQAALDGDSQGFF). The chain crosses the membrane as a helical span at residues 1057 to 1077 (ILHSALIYFLGTFLLSILIAW). The segment at 1087 to 1132 (ASDPPPRPSQASPDTATSTASPAVTPAADASDQDQPTVTNNPEPRG) is disordered. Residues 1097 to 1116 (ASPDTATSTASPAVTPAADA) are compositionally biased toward low complexity. Over residues 1119 to 1132 (QDQPTVTNNPEPRG) the composition is skewed to polar residues.

It is found in the membrane. This is Protein sel-1 homolog 3 (SEL1L3) from Homo sapiens (Human).